The following is a 294-amino-acid chain: Ribosomal RNA small subunit methyltransferase A (294 aa).

S-adenosyl-L-methionine-binding residues include asparagine 29, valine 31, glycine 56, glutamate 77, aspartate 107, and asparagine 126.

The protein belongs to the class I-like SAM-binding methyltransferase superfamily. rRNA adenine N(6)-methyltransferase family. RsmA subfamily.

It is found in the cytoplasm. It carries out the reaction adenosine(1518)/adenosine(1519) in 16S rRNA + 4 S-adenosyl-L-methionine = N(6)-dimethyladenosine(1518)/N(6)-dimethyladenosine(1519) in 16S rRNA + 4 S-adenosyl-L-homocysteine + 4 H(+). Specifically dimethylates two adjacent adenosines (A1518 and A1519) in the loop of a conserved hairpin near the 3'-end of 16S rRNA in the 30S particle. May play a critical role in biogenesis of 30S subunits. The chain is Ribosomal RNA small subunit methyltransferase A from Mycobacterium sp. (strain JLS).